The following is a 404-amino-acid chain: Probable mannosyltransferase KTR3 (404 aa).

At 1–27 (MSVHHKKKLMPKSALLIRKYQKGIRSS) the chain is on the cytoplasmic side. A helical; Signal-anchor for type II membrane protein transmembrane segment spans residues 28–44 (FIGLIIVLSFLFFMSGS). Positions 45–83 (RSPEVPIAQGTSVSRVASKDYLMPFTDKSQGVIHPVDDG) are stem region. Residues 45 to 404 (RSPEVPIAQG…AGNYKLPPGI (360 aa)) are Lumenal-facing. The tract at residues 84 to 404 (KKEKGVMVTL…AGNYKLPPGI (321 aa)) is catalytic. Glu-295 serves as the catalytic Nucleophile.

Belongs to the glycosyltransferase 15 family. In terms of assembly, interacts with SVP26.

The protein localises to the membrane. Its function is as follows. Possible glycosyltransferase that transfers an alpha-D-mannosyl residue from GDP-mannose into lipid-linked oligosaccharide, forming an alpha-(1-&gt;2)-D-mannosyl-D-mannose linkage. The polypeptide is Probable mannosyltransferase KTR3 (KTR3) (Saccharomyces cerevisiae (strain ATCC 204508 / S288c) (Baker's yeast)).